Reading from the N-terminus, the 281-residue chain is Plasmanylethanolamine desaturase (281 aa).

Residues 1–28 (MKTQEIEKKVRQQDAQVLAQGYSPAIRA) are Cytoplasmic-facing. Residues 29 to 45 (MEIAAIVSFVSLEVALV) form a helical membrane-spanning segment. At 46 to 58 (YRLWGTPYAGTWL) the chain is on the periplasmic side. A helical membrane pass occupies residues 59–75 (LLSAVLLGYLAADFVSG). Over 76-123 (FVHWMGDTWGSTEMPVLGKALIRPFREHHVDEKAITRHDFVETNGNNC) the chain is Cytoplasmic. The helical transmembrane segment at 124-138 (LISLPVAIIALCLPM) threads the bilayer. At 139-142 (SGPG) the chain is on the periplasmic side. The chain crosses the membrane as a helical span at residues 143–159 (WVFCASFLGAMIFWVMA). Over 160–281 (TNQFHKWSHM…VQEKPASTRP (122 aa)) the chain is Cytoplasmic. The Histidine box-1 signature appears at 164 to 168 (HKWSH). A Histidine box-2 motif is present at residues 191-195 (HRIHH).

The protein belongs to the fatty acid desaturase CarF family. As to quaternary structure, interacts with CarR.

It is found in the cell inner membrane. It carries out the reaction a 1-(1,2-saturated alkyl)-2-acyl-sn-glycero-3-phosphoethanolamine + 2 Fe(II)-[cytochrome b5] + O2 + 2 H(+) = a 1-O-(1Z-alkenyl)-2-acyl-sn-glycero-3-phosphoethanolamine + 2 Fe(III)-[cytochrome b5] + 2 H2O. It catalyses the reaction 1-O-(13-methyltetradecyl)-2-(13-methyltetradecanoyl)-sn-glycero-3-phosphoethanolamine + 2 Fe(II)-[cytochrome b5] + O2 + 2 H(+) = 1-O-(1Z-13-methyltetradecenyl)-2-(13-methyltetradecanoyl)-sn-glycero-3-phosphoethanolamine + 2 Fe(III)-[cytochrome b5] + 2 H2O. Its function is as follows. Plasmanylethanolamine desaturase involved in plasmalogen biogenesis in the membrane, required for light-induced carotenogenesis. Plasmalogens are glycerophospholipids with a hydrocarbon chain linked by a vinyl ether bond at the glycerol sn-1 position, and are involved in antioxidative and signaling mechanisms, most precisely in sensing photooxidative stress through singlet oxygen. Participates in the light-dependent inactivation of the antisigma factor CarR. Mediates signaling by singlet oxygen, generated via photoexcited protoporphyrin IX. This is Plasmanylethanolamine desaturase from Myxococcus xanthus.